Here is a 425-residue protein sequence, read N- to C-terminus: Adenylosuccinate synthetase (425 aa).

Residues 12 to 18 and 40 to 42 each bind GTP; these read GDEGKGK and GHT. D13 acts as the Proton acceptor in catalysis. Residues D13 and G40 each contribute to the Mg(2+) site. IMP-binding positions include 13-16, 38-41, T130, R144, Q224, T239, and R301; these read DEGK and NAGH. H41 functions as the Proton donor in the catalytic mechanism. Substrate is bound at residue 297–303; it reads TVSNRRR. Residues R303, 329–331, and 411–413 each bind GTP; these read KLD and STS.

This sequence belongs to the adenylosuccinate synthetase family. In terms of assembly, homodimer. The cofactor is Mg(2+).

It is found in the cytoplasm. The catalysed reaction is IMP + L-aspartate + GTP = N(6)-(1,2-dicarboxyethyl)-AMP + GDP + phosphate + 2 H(+). It participates in purine metabolism; AMP biosynthesis via de novo pathway; AMP from IMP: step 1/2. Plays an important role in the de novo pathway of purine nucleotide biosynthesis. Catalyzes the first committed step in the biosynthesis of AMP from IMP. The sequence is that of Adenylosuccinate synthetase from Wolbachia pipientis subsp. Culex pipiens (strain wPip).